A 275-amino-acid polypeptide reads, in one-letter code: Ammonia transport outward protein 3 (275 aa).

Over 1 to 84 (MTSSASSPQD…NCAKYTPHQF (84 aa)) the chain is Extracellular. At Ser-4 the chain carries Phosphoserine. Residues 85–105 (ANPVPLGLASFSLSCLVLSLI) traverse the membrane as a helical segment. Residues 106 to 120 (NANVRGVTDGKWALS) are Cytoplasmic-facing. Residues 121–141 (LFMFFGGAIELFAGLLCFVIG) form a helical membrane-spanning segment. The Extracellular segment spans residues 142–181 (DTYAMTVFSSFGGFWICYGYGLTDTDNLVSGYTDPTMLNN). The chain crosses the membrane as a helical span at residues 182–202 (VIGFFLAGWTVFTFLMLMCTL). At 203-207 (KSTWG) the chain is on the cytoplasmic side. The chain crosses the membrane as a helical span at residues 208–228 (LFLLLTFLDLTFLLLCIGTFI). At 229-236 (DNNNLKMA) the chain is on the extracellular side. Residues 237–257 (GGYFGILSSCCGWYSLYCSVV) traverse the membrane as a helical segment. Over 258–275 (SPSNSYLAFRAHTMPNAP) the chain is Cytoplasmic.

This sequence belongs to the acetate uptake transporter (AceTr) (TC 2.A.96) family.

The protein resides in the cell membrane. Transporter protein required for ammonia export. Induced in rho(0) cells, probably to eliminate the excess ammonia that arises because of a potential defect in ammonia assimilation in those cells. The polypeptide is Ammonia transport outward protein 3 (ATO3) (Saccharomyces cerevisiae (strain ATCC 204508 / S288c) (Baker's yeast)).